The following is a 284-amino-acid chain: Spermidine synthase (284 aa).

The 236-residue stretch at 6–241 (NGWFSEISEF…GSIGFILCSL (236 aa)) folds into the PABS domain. Q37 contributes to the S-adenosyl 3-(methylsulfanyl)propylamine binding site. Y67 contacts putrescine. S-adenosyl 3-(methylsulfanyl)propylamine-binding positions include Q68, D92, E112, 143–144 (DG), and D161. Residue D161 is the Proton acceptor of the active site. Residues 161 to 164 (DSSD) and Y229 contribute to the putrescine site.

It belongs to the spermidine/spermine synthase family.

The enzyme catalyses S-adenosyl 3-(methylsulfanyl)propylamine + putrescine = S-methyl-5'-thioadenosine + spermidine + H(+). It participates in amine and polyamine biosynthesis; spermidine biosynthesis; spermidine from putrescine: step 1/1. Functionally, catalyzes the production of spermidine from putrescine and decarboxylated S-adenosylmethionine (dcSAM). Has a strong preference for putrescine as substrate. The chain is Spermidine synthase (spsA) from Dictyostelium discoideum (Social amoeba).